The sequence spans 70 residues: ATP synthase subunit c (70 aa).

2 helical membrane-spanning segments follow: residues 4 to 24 and 48 to 68; these read IAAG…NGML and ISMA…FVLI.

This sequence belongs to the ATPase C chain family. In terms of assembly, F-type ATPases have 2 components, F(1) - the catalytic core - and F(0) - the membrane proton channel. F(1) has five subunits: alpha(3), beta(3), gamma(1), delta(1), epsilon(1). F(0) has three main subunits: a(1), b(2) and c(10-14). The alpha and beta chains form an alternating ring which encloses part of the gamma chain. F(1) is attached to F(0) by a central stalk formed by the gamma and epsilon chains, while a peripheral stalk is formed by the delta and b chains.

The protein resides in the cell membrane. Its function is as follows. F(1)F(0) ATP synthase produces ATP from ADP in the presence of a proton or sodium gradient. F-type ATPases consist of two structural domains, F(1) containing the extramembraneous catalytic core and F(0) containing the membrane proton channel, linked together by a central stalk and a peripheral stalk. During catalysis, ATP synthesis in the catalytic domain of F(1) is coupled via a rotary mechanism of the central stalk subunits to proton translocation. Key component of the F(0) channel; it plays a direct role in translocation across the membrane. A homomeric c-ring of between 10-14 subunits forms the central stalk rotor element with the F(1) delta and epsilon subunits. This Oenococcus oeni (strain ATCC BAA-331 / PSU-1) protein is ATP synthase subunit c.